We begin with the raw amino-acid sequence, 275 residues long: 4-diphosphocytidyl-2-C-methyl-D-erythritol kinase (275 aa).

The active site involves lysine 14. 98-108 contacts ATP; sequence PMGAGLGGGSS. Residue aspartate 140 is part of the active site.

The protein belongs to the GHMP kinase family. IspE subfamily.

The enzyme catalyses 4-CDP-2-C-methyl-D-erythritol + ATP = 4-CDP-2-C-methyl-D-erythritol 2-phosphate + ADP + H(+). It functions in the pathway isoprenoid biosynthesis; isopentenyl diphosphate biosynthesis via DXP pathway; isopentenyl diphosphate from 1-deoxy-D-xylulose 5-phosphate: step 3/6. Its function is as follows. Catalyzes the phosphorylation of the position 2 hydroxy group of 4-diphosphocytidyl-2C-methyl-D-erythritol. This Francisella tularensis subsp. holarctica (strain FTNF002-00 / FTA) protein is 4-diphosphocytidyl-2-C-methyl-D-erythritol kinase.